Here is a 409-residue protein sequence, read N- to C-terminus: Argininosuccinate synthase (409 aa).

ATP is bound by residues 12 to 20 and Ala-39; that span reads AYSGGLDTS. Residue Tyr-91 coordinates L-citrulline. Gly-121 is a binding site for ATP. Residues Thr-123, Asn-127, and Asp-128 each contribute to the L-aspartate site. Residue Asn-127 participates in L-citrulline binding. Residues Arg-131, Ser-180, Ser-189, Glu-265, and Tyr-277 each coordinate L-citrulline.

It belongs to the argininosuccinate synthase family. Type 1 subfamily. As to quaternary structure, homotetramer.

The protein localises to the cytoplasm. The catalysed reaction is L-citrulline + L-aspartate + ATP = 2-(N(omega)-L-arginino)succinate + AMP + diphosphate + H(+). It participates in amino-acid biosynthesis; L-arginine biosynthesis; L-arginine from L-ornithine and carbamoyl phosphate: step 2/3. This is Argininosuccinate synthase from Buchnera aphidicola subsp. Baizongia pistaciae (strain Bp).